The primary structure comprises 386 residues: NADH-ubiquinone oxidoreductase 49 kDa subunit homolog (386 aa).

It belongs to the complex I 49 kDa subunit family.

The protein resides in the mitochondrion. The enzyme catalyses a ubiquinone + NADH + 5 H(+)(in) = a ubiquinol + NAD(+) + 4 H(+)(out). Its function is as follows. Core subunit of the mitochondrial membrane respiratory chain NADH dehydrogenase (Complex I) that is believed to belong to the minimal assembly required for catalysis. Complex I functions in the transfer of electrons from NADH to the respiratory chain. The immediate electron acceptor for the enzyme is believed to be ubiquinone. Component of the iron-sulfur (IP) fragment of the enzyme. Component of the iron-sulfur (IP) fragment of the enzyme. This chain is NADH-ubiquinone oxidoreductase 49 kDa subunit homolog (NAD7), found in Trypanosoma brucei brucei.